The primary structure comprises 119 residues: C-C motif chemokine 24 (119 aa).

A signal peptide spans 1-26 (MAGLATFVVSLLLVTLCAHCIDPAGS). Disulfide bonds link C33-C58 and C34-C74. N-linked (GlcNAc...) asparagine glycosylation is found at N54 and N115.

This sequence belongs to the intercrine beta (chemokine CC) family.

The protein localises to the secreted. Chemotactic for resting T-lymphocytes, and eosinophils. Has lower chemotactic activity for neutrophils but none for monocytes and activated lymphocytes. Is a strong suppressor of colony formation by a multipotential hematopoietic progenitor cell line. Binds to CCR3. The sequence is that of C-C motif chemokine 24 from Canis lupus familiaris (Dog).